We begin with the raw amino-acid sequence, 194 residues long: Leucyl/phenylalanyl-tRNA--protein transferase (194 aa).

It belongs to the L/F-transferase family.

It is found in the cytoplasm. It catalyses the reaction N-terminal L-lysyl-[protein] + L-leucyl-tRNA(Leu) = N-terminal L-leucyl-L-lysyl-[protein] + tRNA(Leu) + H(+). The catalysed reaction is N-terminal L-arginyl-[protein] + L-leucyl-tRNA(Leu) = N-terminal L-leucyl-L-arginyl-[protein] + tRNA(Leu) + H(+). The enzyme catalyses L-phenylalanyl-tRNA(Phe) + an N-terminal L-alpha-aminoacyl-[protein] = an N-terminal L-phenylalanyl-L-alpha-aminoacyl-[protein] + tRNA(Phe). Functionally, functions in the N-end rule pathway of protein degradation where it conjugates Leu, Phe and, less efficiently, Met from aminoacyl-tRNAs to the N-termini of proteins containing an N-terminal arginine or lysine. The polypeptide is Leucyl/phenylalanyl-tRNA--protein transferase (Chlorobium luteolum (strain DSM 273 / BCRC 81028 / 2530) (Pelodictyon luteolum)).